Consider the following 195-residue polypeptide: Cysteine/O-acetylserine efflux protein (195 aa).

The Periplasmic portion of the chain corresponds to 1 to 9; sequence MTPMLLSAF. Residues 10-32 form a helical membrane-spanning segment; the sequence is WTYTLITALTPGPNNILALSAAT. Over 33 to 46 the chain is Cytoplasmic; the sequence is AHGFRQSIRVLAGM. Residues 47–67 form a helical membrane-spanning segment; sequence SLGFLVVMLLCAGIAFSLAVI. The Periplasmic portion of the chain corresponds to 68–69; it reads DP. The helical transmembrane segment at 70 to 90 threads the bilayer; that stretch reads AIIHLLSWVGAAYILWLAWKI. At 91–104 the chain is on the cytoplasmic side; sequence ATSPAADEKVRPKP. A helical membrane pass occupies residues 105–125; the sequence is VGFWVSFGLQFVNVKIILYGI. Over 126–141 the chain is Periplasmic; that stretch reads TALSTFVLPQTQALNW. Residues 142–162 traverse the membrane as a helical segment; that stretch reads VIGVSILLALIGTFGNVCWAL. Residues 163–176 are Cytoplasmic-facing; the sequence is AGHLFQRAFRHYGR. Residues 177–194 traverse the membrane as a helical segment; the sequence is QLNIILALLLVYCAVRIF. Tyrosine 195 is a topological domain (periplasmic).

It belongs to the Rht family.

It is found in the cell inner membrane. The enzyme catalyses O-acetyl-L-serine(in) = O-acetyl-L-serine(out). The catalysed reaction is L-cysteine(in) = L-cysteine(out). Its function is as follows. Exporter of O-acetylserine (OAS) and cysteine. The chain is Cysteine/O-acetylserine efflux protein (eamB) from Salmonella paratyphi A (strain ATCC 9150 / SARB42).